Here is a 993-residue protein sequence, read N- to C-terminus: Signal peptide, CUB and EGF-like domain-containing protein 3 (993 aa).

The signal sequence occupies residues 1–20 (MGSGRVPGLCLLLLLVHARA). An EGF-like 1; calcium-binding domain is found at 29-69 (DVDECVEGTDNCHIDAICQNTPRSYKCICKSGYTGDGKHCK). Cystine bridges form between cysteine 33–cysteine 46, cysteine 40–cysteine 55, cysteine 57–cysteine 68, cysteine 74–cysteine 86, cysteine 82–cysteine 95, cysteine 97–cysteine 110, cysteine 116–cysteine 127, cysteine 123–cysteine 136, cysteine 161–cysteine 172, cysteine 168–cysteine 182, cysteine 184–cysteine 197, cysteine 201–cysteine 212, cysteine 208–cysteine 221, cysteine 223–cysteine 236, cysteine 240–cysteine 251, cysteine 247–cysteine 260, cysteine 262–cysteine 275, cysteine 281–cysteine 292, cysteine 288–cysteine 301, cysteine 303–cysteine 316, cysteine 322–cysteine 332, cysteine 328–cysteine 341, cysteine 343–cysteine 355, cysteine 361–cysteine 372, cysteine 368–cysteine 381, and cysteine 383–cysteine 397. In terms of domain architecture, EGF-like 2; calcium-binding spans 70–111 (DVDECEREDNAGCVHDCVNIPGNYRCTCYDGFHLAHDGHNCL). The 37-residue stretch at 112–148 (DVDECAEGNGGCQQSCVNMMGSYECHCRDGFFLSDNQ) folds into the EGF-like 3; calcium-binding domain. 3 consecutive EGF-like domains span residues 157–198 (EGMN…RDCK), 199–237 (LTCNYGNGGCQHTCDDTEQGPRCGCHVKFVLHTDGKTCI), and 238–276 (ETCAVNNGGCDSKCHDAATGVHCSCPVGFMLQPDRKTCK). Residues 277–317 (DIDECRLNNGGCDHICRNTVGSFECSCKKGYKLLINERSCQ) form the EGF-like 7; calcium-binding domain. Residues 318 to 356 (DIDECSFDRTCDHMCVNTPGSFQCLCHRGYLLYGVTHCG) form the EGF-like 8; calcium-binding domain. One can recognise an EGF-like 9; calcium-binding domain in the interval 357-398 (DVDECSINKGGCRFGCINTPGSYQCTCPAGQGRLHWNGKDCT). Asparagine 417, asparagine 464, asparagine 685, asparagine 756, and asparagine 785 each carry an N-linked (GlcNAc...) asparagine glycan. 2 disulfide bridges follow: cysteine 804-cysteine 830 and cysteine 857-cysteine 878. The CUB domain maps to 804-916 (CGGELGEFTG…RGFQIPYVTY (113 aa)).

As to quaternary structure, forms homooligomers. Forms heterooligomers with SCUBE1 and SCUBE2. Interacts with TGFBR2 through the CUB domain; this interaction does not affect TGFB1-binding to TGFBR2. Interacts with BMP2, BMP4 and BMP7; the interaction is mediated by the CUB domain. Interacts with BMPR1A, BMPR1B and BMPR2; the interaction with BMPR1A and BMPR1B is BMP2- and BMP4-dependent. N-glycosylated. In terms of processing, proteolytic cleavage produces a CUB-containing C-terminal fragment that retains the ability to bind to TGFBR2. This reaction is catalyzed in vitro by MMP2 and, to a lesser extent, by MMP9. In terms of tissue distribution, highly expressed in femur and humerus with little or no expression in non-bone tissues.

Its subcellular location is the secreted. It is found in the cell surface. Is a positive regulator of the BMP signaling pathway, required for proper chondrogenesis, osteogenesis and skeletal development. It acts as a coreceptor for BMP ligands, particularly BMP2 and BMP4, facilitating their interactions with BMP type I receptors. It is required for ligand-induced recruitment of BMP receptors to lipid rafts. Binds to TGFBR2 and activates TGFB signaling. In Mus musculus (Mouse), this protein is Signal peptide, CUB and EGF-like domain-containing protein 3.